A 332-amino-acid polypeptide reads, in one-letter code: L-lactate dehydrogenase A chain (332 aa).

NAD(+)-binding positions include 29-57 (GMVGMASAVSILLKDLCDELALVDVMEDK) and arginine 99. Substrate contacts are provided by arginine 106, asparagine 138, and arginine 169. Residue asparagine 138 coordinates NAD(+). Histidine 193 (proton acceptor) is an active-site residue. Threonine 248 is a substrate binding site.

Belongs to the LDH/MDH superfamily. LDH family. As to quaternary structure, homotetramer.

The protein resides in the cytoplasm. The enzyme catalyses (S)-lactate + NAD(+) = pyruvate + NADH + H(+). Its pathway is fermentation; pyruvate fermentation to lactate; (S)-lactate from pyruvate: step 1/1. Interconverts simultaneously and stereospecifically pyruvate and lactate with concomitant interconversion of NADH and NAD(+). The sequence is that of L-lactate dehydrogenase A chain (ldha) from Sphyraena argentea (Pacific barracuda).